The following is a 698-amino-acid chain: Elongation factor G (698 aa).

Residues 6 to 281 (ENIRNIGICA…AVVDYLPSPI (276 aa)) form the tr-type G domain. Residues 15–22 (AHIDAGKT), 79–83 (DTPGH), and 133–136 (NKMD) contribute to the GTP site.

It belongs to the TRAFAC class translation factor GTPase superfamily. Classic translation factor GTPase family. EF-G/EF-2 subfamily.

It localises to the cytoplasm. Catalyzes the GTP-dependent ribosomal translocation step during translation elongation. During this step, the ribosome changes from the pre-translocational (PRE) to the post-translocational (POST) state as the newly formed A-site-bound peptidyl-tRNA and P-site-bound deacylated tRNA move to the P and E sites, respectively. Catalyzes the coordinated movement of the two tRNA molecules, the mRNA and conformational changes in the ribosome. This is Elongation factor G from Rickettsia bellii (strain RML369-C).